Consider the following 241-residue polypeptide: Ribosome-inactivating protein luffaculin 1 (241 aa).

Asn-28, Asn-33, Asn-77, and Asn-84 each carry an N-linked (GlcNAc...) asparagine glycan. Glu-159 is a catalytic residue. Asn-205 is a glycosylation site (N-linked (GlcNAc...) asparagine).

Belongs to the ribosome-inactivating protein family. Type 1 RIP subfamily.

The catalysed reaction is Endohydrolysis of the N-glycosidic bond at one specific adenosine on the 28S rRNA.. The chain is Ribosome-inactivating protein luffaculin 1 from Luffa acutangula (Ridged gourd).